The sequence spans 99 residues: Plastocyanin (99 aa).

The Plastocyanin-like domain maps to V1–N99. Residues H37, C84, H87, and M92 each coordinate Cu cation.

Belongs to the plastocyanin family. It depends on Cu(2+) as a cofactor.

The protein resides in the plastid. Its subcellular location is the chloroplast thylakoid membrane. Participates in electron transfer between P700 and the cytochrome b6-f complex in photosystem I. The sequence is that of Plastocyanin (PETE) from Sambucus nigra (European elder).